We begin with the raw amino-acid sequence, 336 residues long: Dihydroorotate dehydrogenase (quinone) (336 aa).

FMN is bound by residues 62–66 and Thr-86; that span reads AGLDK. Lys-66 provides a ligand contact to substrate. 111–115 is a binding site for substrate; the sequence is NRMGF. Positions 139 and 172 each coordinate FMN. Asn-172 provides a ligand contact to substrate. Ser-175 functions as the Nucleophile in the catalytic mechanism. Residue Asn-177 participates in substrate binding. Residues Lys-217 and Thr-245 each coordinate FMN. Residue 246–247 participates in substrate binding; it reads NT. Residues Gly-268, Gly-297, and 318–319 contribute to the FMN site; that span reads YS.

It belongs to the dihydroorotate dehydrogenase family. Type 2 subfamily. In terms of assembly, monomer. FMN serves as cofactor.

The protein resides in the cell membrane. It carries out the reaction (S)-dihydroorotate + a quinone = orotate + a quinol. It participates in pyrimidine metabolism; UMP biosynthesis via de novo pathway; orotate from (S)-dihydroorotate (quinone route): step 1/1. Catalyzes the conversion of dihydroorotate to orotate with quinone as electron acceptor. In Pectobacterium atrosepticum (strain SCRI 1043 / ATCC BAA-672) (Erwinia carotovora subsp. atroseptica), this protein is Dihydroorotate dehydrogenase (quinone).